A 94-amino-acid polypeptide reads, in one-letter code: UPF0235 protein TK0768 (94 aa).

Belongs to the UPF0235 family.

In Thermococcus kodakarensis (strain ATCC BAA-918 / JCM 12380 / KOD1) (Pyrococcus kodakaraensis (strain KOD1)), this protein is UPF0235 protein TK0768.